The sequence spans 156 residues: 6,7-dimethyl-8-ribityllumazine synthase (156 aa).

5-amino-6-(D-ribitylamino)uracil is bound by residues phenylalanine 22, 57 to 59, and 81 to 83; these read AVE and SVI. 86–87 is a binding site for (2S)-2-hydroxy-3-oxobutyl phosphate; that stretch reads GT. The active-site Proton donor is the histidine 89. Phenylalanine 114 contacts 5-amino-6-(D-ribitylamino)uracil. Arginine 128 is a binding site for (2S)-2-hydroxy-3-oxobutyl phosphate.

This sequence belongs to the DMRL synthase family. Forms an icosahedral capsid composed of 60 subunits, arranged as a dodecamer of pentamers.

The enzyme catalyses (2S)-2-hydroxy-3-oxobutyl phosphate + 5-amino-6-(D-ribitylamino)uracil = 6,7-dimethyl-8-(1-D-ribityl)lumazine + phosphate + 2 H2O + H(+). The protein operates within cofactor biosynthesis; riboflavin biosynthesis; riboflavin from 2-hydroxy-3-oxobutyl phosphate and 5-amino-6-(D-ribitylamino)uracil: step 1/2. Its function is as follows. Catalyzes the formation of 6,7-dimethyl-8-ribityllumazine by condensation of 5-amino-6-(D-ribitylamino)uracil with 3,4-dihydroxy-2-butanone 4-phosphate. This is the penultimate step in the biosynthesis of riboflavin. This chain is 6,7-dimethyl-8-ribityllumazine synthase, found in Vibrio vulnificus (strain CMCP6).